A 237-amino-acid polypeptide reads, in one-letter code: DCN1-like protein 5 (237 aa).

A Phosphoserine; by IKKA modification is found at serine 41. A DCUN1 domain is found at 46 to 232 (FSRKKCLAWF…LLDEFVEWQK (187 aa)).

As to quaternary structure, part of a complex that contains DCUN1D5, CUL1 and RBX1; this interaction is bridged by CUL1. Interacts (via the DCUN1 domain) with the unneddylated cullins: interacts with CUL1, CUL2, CUL3, CUL4A, CUL4B and CUL5; these interactions promote the cullin neddylation and the identity of the cullin dictates the affinity of the interaction. Interacts (via DCUN1 domain) with UBE2M (N-terminally acetylated form) and probably with UBE2F (N-terminally acetylated form). May also interact with regulators or subunits of cullin-RING ligases such as RBX1, RNF7, ELOB and DDB1; these interactions are bridged by cullins. Interacts with CAND1; this interaction is bridged by cullins and strongly inhibits the neddylation of cullins. These CAND-cullin-DCNL complexes can only be neddylated in the presence of a substrate adapter. Post-translationally, phosphorylation at Ser-41 is independent of cullin's interaction. Phosphorylated in response to both TICAM1 and MYD88 dependent Toll-like receptor (TLR) pathway activation. Phosphorylated in response to IL1B stimulation. Highly expressed in testis. Lower levels of expression in skin, thymus, spleen, lymph nodes, lung, brain, heart, skeletal muscles, kidney, liver an ovary.

It localises to the nucleus. Its subcellular location is the cytoplasm. It is found in the cytoskeleton. The protein resides in the spindle. In terms of biological role, contributes to the neddylation of all cullins by transferring NEDD8 from N-terminally acetylated NEDD8-conjugating E2s enzyme to different cullin C-terminal domain-RBX complexes which is necessary for the activation of cullin-RING E3 ubiquitin ligases (CRLs). May play a role in DNA damage response and may participate in cell proliferation and anchorage-independent cell growth. This is DCN1-like protein 5 from Mus musculus (Mouse).